Here is a 195-residue protein sequence, read N- to C-terminus: FMN-dependent NADH:quinone oxidoreductase 2 (195 aa).

Residues 16–18 (SVS) and 85–88 (MWNL) contribute to the FMN site.

It belongs to the azoreductase type 1 family. In terms of assembly, homodimer. It depends on FMN as a cofactor.

The enzyme catalyses 2 a quinone + NADH + H(+) = 2 a 1,4-benzosemiquinone + NAD(+). It catalyses the reaction N,N-dimethyl-1,4-phenylenediamine + anthranilate + 2 NAD(+) = 2-(4-dimethylaminophenyl)diazenylbenzoate + 2 NADH + 2 H(+). Its function is as follows. Quinone reductase that provides resistance to thiol-specific stress caused by electrophilic quinones. In terms of biological role, also exhibits azoreductase activity. Catalyzes the reductive cleavage of the azo bond in aromatic azo compounds to the corresponding amines. The polypeptide is FMN-dependent NADH:quinone oxidoreductase 2 (Photobacterium profundum (strain SS9)).